The chain runs to 116 residues: Small ribosomal subunit protein uS13 (116 aa).

Positions glycine 88–alanine 116 are disordered.

It belongs to the universal ribosomal protein uS13 family. Part of the 30S ribosomal subunit. Forms a loose heterodimer with protein S19. Forms two bridges to the 50S subunit in the 70S ribosome.

Located at the top of the head of the 30S subunit, it contacts several helices of the 16S rRNA. In the 70S ribosome it contacts the 23S rRNA (bridge B1a) and protein L5 of the 50S subunit (bridge B1b), connecting the 2 subunits; these bridges are implicated in subunit movement. Contacts the tRNAs in the A and P-sites. This is Small ribosomal subunit protein uS13 from Finegoldia magna (strain ATCC 29328 / DSM 20472 / WAL 2508) (Peptostreptococcus magnus).